Here is a 70-residue protein sequence, read N- to C-terminus: MNNQKKIKCPICGKQNTWRPDNQFRPFCSERCKLIDLGEWASESRKIPGSSIDPESIVTTNNKQDNVDEQ.

Residues cysteine 9, cysteine 12, cysteine 28, and cysteine 32 each coordinate Zn(2+). The tract at residues 43 to 70 (ESRKIPGSSIDPESIVTTNNKQDNVDEQ) is disordered.

It belongs to the DNA gyrase inhibitor YacG family. As to quaternary structure, interacts with GyrB. The cofactor is Zn(2+).

Functionally, inhibits all the catalytic activities of DNA gyrase by preventing its interaction with DNA. Acts by binding directly to the C-terminal domain of GyrB, which probably disrupts DNA binding by the gyrase. The protein is DNA gyrase inhibitor YacG of Legionella pneumophila (strain Corby).